We begin with the raw amino-acid sequence, 295 residues long: uncharacterized protein (295 aa).

Belongs to the ROK (NagC/XylR) family.

This is an uncharacterized protein from Clostridium perfringens (strain 13 / Type A).